A 118-amino-acid chain; its full sequence is NADH-quinone oxidoreductase subunit A (118 aa).

3 helical membrane-spanning segments follow: residues 8–28 (IGIF…LAFF), 64–84 (ALAF…AVAF), and 87–107 (VGLY…AGLL).

It belongs to the complex I subunit 3 family. As to quaternary structure, NDH-1 is composed of 14 different subunits. Subunits NuoA, H, J, K, L, M, N constitute the membrane sector of the complex.

Its subcellular location is the cell membrane. The catalysed reaction is a quinone + NADH + 5 H(+)(in) = a quinol + NAD(+) + 4 H(+)(out). Functionally, NDH-1 shuttles electrons from NADH, via FMN and iron-sulfur (Fe-S) centers, to quinones in the respiratory chain. The immediate electron acceptor for the enzyme in this species is believed to be ubiquinone. Couples the redox reaction to proton translocation (for every two electrons transferred, four hydrogen ions are translocated across the cytoplasmic membrane), and thus conserves the redox energy in a proton gradient. In Chloroflexus aurantiacus (strain ATCC 29366 / DSM 635 / J-10-fl), this protein is NADH-quinone oxidoreductase subunit A.